We begin with the raw amino-acid sequence, 248 residues long: UPF0736 protein BCE33L1074 (248 aa).

The protein belongs to the UPF0736 family.

The protein is UPF0736 protein BCE33L1074 of Bacillus cereus (strain ZK / E33L).